The primary structure comprises 326 residues: Phenylalanine--tRNA ligase alpha subunit (326 aa).

Residue Glu251 participates in Mg(2+) binding.

The protein belongs to the class-II aminoacyl-tRNA synthetase family. Phe-tRNA synthetase alpha subunit type 1 subfamily. In terms of assembly, tetramer of two alpha and two beta subunits. Requires Mg(2+) as cofactor.

Its subcellular location is the cytoplasm. The enzyme catalyses tRNA(Phe) + L-phenylalanine + ATP = L-phenylalanyl-tRNA(Phe) + AMP + diphosphate + H(+). The sequence is that of Phenylalanine--tRNA ligase alpha subunit from Alteromonas mediterranea (strain DSM 17117 / CIP 110805 / LMG 28347 / Deep ecotype).